Consider the following 230-residue polypeptide: Uracil-DNA glycosylase (230 aa).

Aspartate 70 acts as the Proton acceptor in catalysis.

Belongs to the uracil-DNA glycosylase (UDG) superfamily. UNG family.

The protein resides in the cytoplasm. It carries out the reaction Hydrolyzes single-stranded DNA or mismatched double-stranded DNA and polynucleotides, releasing free uracil.. Excises uracil residues from the DNA which can arise as a result of misincorporation of dUMP residues by DNA polymerase or due to deamination of cytosine. In Pseudomonas fluorescens (strain SBW25), this protein is Uracil-DNA glycosylase.